The chain runs to 304 residues: Probable alpha-L-glutamate ligase 2 (304 aa).

Residues 107–290 form the ATP-grasp domain; sequence HQLLARKGVG…IAGAIIDYIV (184 aa). ATP-binding positions include Lys144, 181 to 182, Asp190, and 214 to 216; these read EF and RSN. 3 residues coordinate Mg(2+): Asp251, Glu263, and Asn265. Asp251, Glu263, and Asn265 together coordinate Mn(2+).

The protein belongs to the RimK family. The cofactor is Mg(2+). Mn(2+) is required as a cofactor.

The protein is Probable alpha-L-glutamate ligase 2 of Hahella chejuensis (strain KCTC 2396).